A 3797-amino-acid polypeptide reads, in one-letter code: A-kinase anchor protein 9 (3797 aa).

The segment at 1 to 140 is disordered; sequence MEDEERQRKL…SSEQGAQSSQ (140 aa). Polar residues-rich tracts occupy residues 50–65 and 92–108; these read HTDQ…SSQR and EIST…NGCN. A compositionally biased stretch (basic and acidic residues) spans 115–124; sequence KPTDPLREEE. S139 carries the post-translational modification Phosphoserine. Coiled-coil stretches lie at residues 140–607 and 640–976; these read QTCL…LRTQ and IHYK…LLAN. S1288 carries the post-translational modification Phosphoserine. Disordered stretches follow at residues 1643–1668, 2323–2343, and 2419–2454; these read STQT…LERS, VVST…EESF, and SDNL…ASRT. 2 stretches are compositionally biased toward basic and acidic residues: residues 1648 to 1668 and 2328 to 2343; these read DGHD…LERS and QQRE…EESF. A coiled-coil region spans residues 1808–2377; the sequence is SRLQAAVEKL…MTHMNNVLKE (570 aa). Positions 2438–2454 are enriched in polar residues; sequence KQTSLTRLQESPEASRT. The PKA-RII subunit binding domain stretch occupies residues 2498-2510; the sequence is DLQRSLEKFAAAL. Disordered stretches follow at residues 2604–2695 and 3271–3296; these read LEEA…SSSG and MEKD…QKKM. Residues 2606–2615 are compositionally biased toward acidic residues; that stretch reads EAEERPEEGG. Positions 2642 to 2669 are enriched in basic and acidic residues; the sequence is PLTEAKEKLSYSLEKEKRTGEQESREAP. Residues 2975-3325 adopt a coiled-coil conformation; that stretch reads LQKADRRSLL…QVYKLDLEGK (351 aa). Positions 3279–3294 are enriched in polar residues; it reads QKTLQTEQEANTQGQK. 3 positions are modified to phosphoserine: S3732, S3755, and S3787.

As to quaternary structure, interacts with the regulatory region of protein kinase N (PKN), protein phosphatase 2A (PP2A), protein phosphatase 1 (PP1) and the immature non-phosphorylated form of PKC epsilon. Interacts with CIP4 and FNBP1. Interacts with chloride intracellular channel proteins CLIC1, CLIC4 and CLIC5. CSNK1D binding promotes its centrosomal subcellular location. Interacts with GM130/GOLGA2; leading to recruitment to the Golgi apparatus. Interacts with KCNQ1; targets protein kinase A (PKA) catalytic and regulatory subunits and protein phosphatase 1 (PP1), to the heterodimer KCNQ1-KCNE1. Interacts with PDE4DIP isoform 2; this interaction stabilizes both proteins. In complex with PDE4DIP isoform 2, recruits CAMSAP2 to the Golgi apparatus. Forms a pericentrosomal complex with CDK5RAP2, EB1/MAPRE1 and PDE4DIP isoform 2; within this complex, MAPRE1 binding to CDK5RAP2 may be mediated by PDE4DIP. Interacts with MAPRE1 and MAPRE3. Interacts (via C-terminus) with CAMSAP2; this interaction is much stronger in the presence of PDE4DIP isoform 2. Interacts with CAMSAP3. Interacts (via C-terminus) with the gamma-tubulin ring complex (gamma-TuRC), composed of gamma-tubulin, TUBGCP2, TUBGCP3, TUBGCP4, TUBGCP5 and TUBGCP6.

The protein localises to the golgi apparatus. It is found in the cytoplasm. It localises to the cytoskeleton. Its subcellular location is the microtubule organizing center. The protein resides in the centrosome. Scaffolding protein that assembles several protein kinases and phosphatases on the centrosome and Golgi apparatus. Required to maintain the integrity of the Golgi apparatus. Required for microtubule nucleation at the cis-side of the Golgi apparatus. Required for association of the centrosomes with the poles of the bipolar mitotic spindle during metaphase. In complex with PDE4DIP isoform 2/MMG8/SMYLE, recruits CAMSAP2 to the Golgi apparatus and tethers non-centrosomal minus-end microtubules to the Golgi, an important step for polarized cell movement. In complex with PDE4DIP isoform 2, EB1/MAPRE1 and CDK5RAP2, contributes to microtubules nucleation and extension also from the centrosome to the cell periphery. In Mus musculus (Mouse), this protein is A-kinase anchor protein 9 (Akap9).